The sequence spans 664 residues: Lamin tail domain-containing protein 2 (664 aa).

The interval 1–40 (MAPKSCQESEDKQVSPAPAGVQPDSSDLGSPVGTPVDRVA) is disordered. The stretch at 118 to 169 (QDKFLRNQVQKLTLELKAQKEQAQQEKQQLEEKLQQNLWAKQQLEAELQTFQ) forms a coiled coil. A compositionally biased stretch (polar residues) spans 245–260 (SDQKQSQPPTSETYTL). Disordered regions lie at residues 245–272 (SDQK…TEKP) and 286–329 (TSSS…MQEH). Residues 286-298 (TSSSERTQSDTSS) show a composition bias toward low complexity. The segment covering 312-325 (GHPSQGTNLASSEQ) has biased composition (polar residues). The 120-residue stretch at 362–481 (PYTRPQLNPF…QVLSEHQATP (120 aa)) folds into the LTD domain. A disordered region spans residues 504–563 (SESEPDVHPGEQQCRPSSPQKGRAKDAGARRKKPGPGVRQHRHSSTSGLRASRTLHPTET). Residues 533 to 547 (RRKKPGPGVRQHRHS) show a composition bias toward basic residues.

The sequence is that of Lamin tail domain-containing protein 2 (Lmntd2) from Mus musculus (Mouse).